We begin with the raw amino-acid sequence, 343 residues long: MSHQTGIKANAELLKFFGKCKDGKTRVLKVSIENEELRLVSHSDVKRDWEKDYDTLVRPLIEESTPCYILYRLDYKIPTGYAWLLMSWVPESATVRQKMLYASTKATLKLEFGSGHIKEELNATSKEETTLQGYQKHKVDFNTPAPLTSREEELAELRKTEVKTDFGIDTKQQTLGGINCPIADAVAQALHDMRRGGYNYLQFRIDLEEEKIHLVKADNIELTGLPAQIPTDHARYHLYIFKHHHEGNYLESVVFVYSMPGYSCSIRERMMYSSCKGPFSATIEKHGIQVAKKLEIDNGAELTEEFLHEELHPRKLNLRPQFSKPKGPPSRGAKRLTKPQAVE.

ADF-H domains lie at Gln-4–Val-139 and Gly-177–His-312. A disordered region spans residues Arg-314–Glu-343.

Belongs to the actin-binding proteins ADF family. Twinfilin subfamily. Interacts with G-actin; ADP-actin form.

Its subcellular location is the cytoplasm. It localises to the cytoskeleton. It is found in the cell cortex. In terms of biological role, actin-binding protein involved in motile and morphological processes. Inhibits actin polymerization, likely by sequestering G-actin. The sequence is that of Twinfilin (twf) from Anopheles gambiae (African malaria mosquito).